Here is a 68-residue protein sequence, read N- to C-terminus: Large ribosomal subunit protein uL29 (68 aa).

This sequence belongs to the universal ribosomal protein uL29 family.

The protein is Large ribosomal subunit protein uL29 of Acidiphilium cryptum (strain JF-5).